The chain runs to 65 residues: 7 kDa A-type inclusion protein (65 aa).

Positions 1–20 are enriched in polar residues; that stretch reads MSNQNIPQLSEYQTSVSQVA. The disordered stretch occupies residues 1-32; it reads MSNQNIPQLSEYQTSVSQVAVTPPPKPKTPQI.

In Bos taurus (Bovine), this protein is 7 kDa A-type inclusion protein.